We begin with the raw amino-acid sequence, 76 residues long: MSKTTVIAIFMVVLVLGLVTKETQGQELCHDYMSGTELCEEDKCVAKCIWMHGTAAKGTCMPKPSKQCVCTYSCNA.

The signal sequence occupies residues 1–25; it reads MSKTTVIAIFMVVLVLGLVTKETQG. Disulfide bonds link cysteine 29–cysteine 74, cysteine 39–cysteine 60, cysteine 44–cysteine 68, and cysteine 48–cysteine 70.

It belongs to the DEFL family. In terms of tissue distribution, expressed in flower buds, but not in stems, roots or rosette leaves.

Its subcellular location is the secreted. In Arabidopsis thaliana (Mouse-ear cress), this protein is Defensin-like protein 122 (LCR30).